A 284-amino-acid polypeptide reads, in one-letter code: Bifunctional protein FolD (284 aa).

NADP(+)-binding positions include 166-168 (GAS) and isoleucine 232.

It belongs to the tetrahydrofolate dehydrogenase/cyclohydrolase family. In terms of assembly, homodimer.

It catalyses the reaction (6R)-5,10-methylene-5,6,7,8-tetrahydrofolate + NADP(+) = (6R)-5,10-methenyltetrahydrofolate + NADPH. The enzyme catalyses (6R)-5,10-methenyltetrahydrofolate + H2O = (6R)-10-formyltetrahydrofolate + H(+). It functions in the pathway one-carbon metabolism; tetrahydrofolate interconversion. Catalyzes the oxidation of 5,10-methylenetetrahydrofolate to 5,10-methenyltetrahydrofolate and then the hydrolysis of 5,10-methenyltetrahydrofolate to 10-formyltetrahydrofolate. This Shewanella frigidimarina (strain NCIMB 400) protein is Bifunctional protein FolD.